Reading from the N-terminus, the 180-residue chain is Large ribosomal subunit protein uL6 (180 aa).

The protein belongs to the universal ribosomal protein uL6 family. In terms of assembly, part of the 50S ribosomal subunit.

Functionally, this protein binds to the 23S rRNA, and is important in its secondary structure. It is located near the subunit interface in the base of the L7/L12 stalk, and near the tRNA binding site of the peptidyltransferase center. This Borrelia turicatae (strain 91E135) protein is Large ribosomal subunit protein uL6.